The chain runs to 170 residues: Adenine phosphoribosyltransferase (170 aa).

It belongs to the purine/pyrimidine phosphoribosyltransferase family. In terms of assembly, homodimer.

Its subcellular location is the cytoplasm. The catalysed reaction is AMP + diphosphate = 5-phospho-alpha-D-ribose 1-diphosphate + adenine. The protein operates within purine metabolism; AMP biosynthesis via salvage pathway; AMP from adenine: step 1/1. Catalyzes a salvage reaction resulting in the formation of AMP, that is energically less costly than de novo synthesis. In Lactococcus lactis subsp. lactis (strain IL1403) (Streptococcus lactis), this protein is Adenine phosphoribosyltransferase.